Here is a 216-residue protein sequence, read N- to C-terminus: Inner membrane assembly complex subunit 22 (216 aa).

A mitochondrion-targeting transit peptide spans 1-26; it reads MFMARQVLRNGLFLRSLAPIKITART. Residues 27–43 lie on the Mitochondrial matrix side of the membrane; the sequence is VASANAGIKRKSRFDKT. A helical membrane pass occupies residues 44–63; the sequence is MIKPLLLVMIFGSILNAVIA. Residues 64–93 adopt a coiled-coil conformation; the sequence is EKRNIIDMERKYKLKLDKLKELIRRVHDNN. The Mitochondrial intermembrane portion of the chain corresponds to 64-216; the sequence is EKRNIIDMER…KEHDKIPKFL (153 aa).

Component of the inner membrane assembly (INA) complex, composed of INA17 and INA22. Interacts with a subset of F(1)F(0)-ATP synthase subunits of the F(1)-domain and the peripheral stalk.

The protein localises to the mitochondrion inner membrane. Component of the INA complex (INAC) that promotes the biogenesis of mitochondrial F(1)F(0)-ATP synthase. INAC facilitates the assembly of the peripheral stalk and promotes the assembly of the catalytic F(1)-domain with the membrane-embedded F(0)-domain. This is Inner membrane assembly complex subunit 22 from Saccharomyces cerevisiae (strain ATCC 204508 / S288c) (Baker's yeast).